The following is a 768-amino-acid chain: Polyadenylate-binding protein, cytoplasmic and nuclear (768 aa).

Over residues 1 to 11 (MSAETATNPPV) the composition is skewed to polar residues. Residues 1 to 52 (MSAETATNPPVDTTPGAAPESATNGSNANVAADTTAGEASQTTSSTTPTAQP) are disordered. Positions 39–52 (ASQTTSSTTPTAQP) are enriched in low complexity. RRM domains follow at residues 55-133 (ASLY…WSQR), 143-220 (GNVF…HHIA), 236-314 (TNVY…RAQK), and 340-470 (VNLY…LAQR). 3 disordered regions span residues 374-428 (DFAP…EKKP), 633-662 (QQGM…NASP), and 739-768 (KNKG…ETKS). Positions 637–646 (GRPGQAGRGQ) are enriched in gly residues. The PABC domain occupies 662-739 (PNGLTLQVLN…ALTVYDEYVK (78 aa)). The segment covering 753 to 768 (NKSKDASQETAEETKS) has biased composition (basic and acidic residues).

This sequence belongs to the polyadenylate-binding protein type-1 family.

Its subcellular location is the cytoplasm. The protein resides in the nucleus. In terms of biological role, binds the poly(A) tail of mRNA. Appears to be an important mediator of the multiple roles of the poly(A) tail in mRNA biogenesis, stability and translation. In the nucleus, involved in both mRNA cleavage and polyadenylation. Is also required for efficient mRNA export to the cytoplasm. Acts in concert with a poly(A)-specific nuclease (PAN) to affect poly(A) tail shortening, which may occur concomitantly with either nucleocytoplasmic mRNA transport or translational initiation. In the cytoplasm, stimulates translation initiation and regulates mRNA decay through translation termination-coupled poly(A) shortening, probably mediated by PAN. The sequence is that of Polyadenylate-binding protein, cytoplasmic and nuclear (PAB1) from Coccidioides immitis (strain RS) (Valley fever fungus).